Here is a 443-residue protein sequence, read N- to C-terminus: Threonine/serine transporter TdcC (443 aa).

11 helical membrane-spanning segments follow: residues 22–42, 44–64, 97–117, 135–155, 163–183, 207–227, 259–279, 319–339, 366–386, 389–409, and 422–442; these read TTWT…FFPI, AGFG…PIAF, GVVI…IYGV, ALNR…IIWF, VMSF…LSLI, ILVT…FSPI, ASIL…FALS, ASII…LGTL, LSMV…PNIL, IEAM…MYAI, and IDNV…VYKV.

The protein belongs to the amino acid/polyamine transporter 2 family. SdaC/TdcC subfamily.

The protein resides in the cell inner membrane. It catalyses the reaction L-threonine(in) + H(+)(in) = L-threonine(out) + H(+)(out). The catalysed reaction is L-serine(in) + H(+)(in) = L-serine(out) + H(+)(out). Its function is as follows. Involved in the import of threonine and serine into the cell, with the concomitant import of a proton (symport system). This chain is Threonine/serine transporter TdcC, found in Escherichia fergusonii (strain ATCC 35469 / DSM 13698 / CCUG 18766 / IAM 14443 / JCM 21226 / LMG 7866 / NBRC 102419 / NCTC 12128 / CDC 0568-73).